We begin with the raw amino-acid sequence, 49 residues long: Osteocalcin (49 aa).

The region spanning 1–47 (YLDHWLGAPAPYPDPLEPRREVCELNPDCDELADHIGFQEAYRRFYG) is the Gla domain. Pro-9 is modified (hydroxyproline). Ca(2+)-binding residues include Glu-17, Glu-21, Glu-24, and Asp-30. 3 positions are modified to 4-carboxyglutamate: Glu-17, Glu-21, and Glu-24. Cys-23 and Cys-29 are disulfide-bonded.

Belongs to the osteocalcin/matrix Gla protein family. Post-translationally, gamma-carboxyglutamate residues are formed by vitamin K dependent carboxylation by GGCX. These residues are essential for the binding of calcium. Decarboxylation promotes the hormone activity.

It is found in the secreted. Functionally, the carboxylated form is one of the main organic components of the bone matrix, which constitutes 1-2% of the total bone protein. It acts as a negative regulator of bone formation and is required to limit bone formation without impairing bone resorption or mineralization. The carboxylated form binds strongly to apatite and calcium. Its function is as follows. The uncarboxylated form acts as a hormone secreted by osteoblasts, which regulates different cellular processes, such as energy metabolism, male fertility and brain development. Regulates of energy metabolism by acting as a hormone favoring pancreatic beta-cell proliferation, insulin secretion and sensitivity and energy expenditure. Uncarboxylated osteocalcin hormone also promotes testosterone production in the testes: acts as a ligand for G protein-coupled receptor GPRC6A at the surface of Leydig cells, initiating a signaling response that promotes the expression of enzymes required for testosterone synthesis in a CREB-dependent manner. Also acts as a regulator of brain development: osteocalcin hormone crosses the blood-brain barrier and acts as a ligand for GPR158 on neurons, initiating a signaling response that prevents neuronal apoptosis in the hippocampus, favors the synthesis of all monoamine neurotransmitters and inhibits that of gamma-aminobutyric acid (GABA). Osteocalcin also crosses the placenta during pregnancy and maternal osteocalcin is required for fetal brain development. This Equus caballus (Horse) protein is Osteocalcin (BGLAP).